The chain runs to 309 residues: Dicarboxylate carrier UCP2 (309 aa).

Over 1–16 (MVGFKATDVPPTATVK) the chain is Mitochondrial intermembrane. 3 Solcar repeats span residues 11-106 (PTAT…VKQF), 114-203 (ASIG…IKDA), and 212-297 (DDLP…LKRA). An important for interaction with long-chain fatty acids region spans residues 16-63 (KFLGAGTAACIADLITFPLDTAKVRLQIQGESQGPVHATASAQYRGVM). A helical membrane pass occupies residues 17–40 (FLGAGTAACIADLITFPLDTAKVR). Residues 41 to 77 (LQIQGESQGPVHATASAQYRGVMGTILTMVRTEGPRS) lie on the Mitochondrial matrix side of the membrane. A helical transmembrane segment spans residues 78-103 (LYNGLVAGLQRQMSFASVRIGLYDSV). Residues 104-119 (KQFYTKGSEHASIGSR) lie on the Mitochondrial intermembrane side of the membrane. A helical transmembrane segment spans residues 120–145 (LLAGSTTGALAVAVAQPTDVVKVRFQ). Residues 146–173 (AQARAGGGRRYQSTVNAYKTIAREEGFR) are Mitochondrial matrix-facing. A helical transmembrane segment spans residues 174-199 (GLWKGTSPNVARNAIVNCAELVTYDL). Residues 200 to 217 (IKDALLKANLMTDDLPCH) lie on the Mitochondrial intermembrane side of the membrane. A helical transmembrane segment spans residues 218–242 (FTSAFGAGFCTTVIASPVDVVKTRY). The Mitochondrial matrix portion of the chain corresponds to 243–268 (MNSALGQYSSAGHCALTMLQKEGPRA). A helical membrane pass occupies residues 269–294 (FYKGFMPSFLRLGSWNVVMFVTYEQL). The tract at residues 278-285 (LRLGSWNV) is important for interaction with long-chain fatty acids. The Mitochondrial intermembrane segment spans residues 295–309 (KRALMAACTSREAPF).

The protein belongs to the mitochondrial carrier (TC 2.A.29) family. As to quaternary structure, homotetramer. Adopts an asymmetrical dimer of dimers functional form. Interacts with MICU1 (when methylated); leading to decrease the calcium sensitivity of MICU1.

The protein localises to the mitochondrion inner membrane. The catalysed reaction is L-aspartate(out) + phosphate(in) + H(+)(in) = L-aspartate(in) + phosphate(out) + H(+)(out). The enzyme catalyses oxaloacetate(out) + phosphate(in) + H(+)(in) = oxaloacetate(in) + phosphate(out) + H(+)(out). It catalyses the reaction (S)-malate(out) + phosphate(in) + H(+)(in) = (S)-malate(in) + phosphate(out) + H(+)(out). It carries out the reaction malonate(out) + phosphate(in) + H(+)(in) = malonate(in) + phosphate(out) + H(+)(out). The catalysed reaction is sulfate(out) + phosphate(in) + H(+)(in) = sulfate(in) + phosphate(out) + H(+)(out). The enzyme catalyses (S)-malate(out) = (S)-malate(in). It catalyses the reaction L-aspartate(out) = L-aspartate(in). It carries out the reaction phosphate(in) = phosphate(out). The catalysed reaction is chloride(in) = chloride(out). The enzyme catalyses H(+)(in) = H(+)(out). It catalyses the reaction a long-chain fatty acid(out) = a long-chain fatty acid(in). Its function is as follows. Antiporter that exports dicarboxylate intermediates of the Krebs cycle in exchange for phosphate plus a proton across the inner membrane of mitochondria, a process driven by mitochondrial motive force with an overall impact on glycolysis, glutaminolysis and glutathione-dependent redox balance. Continuous export of oxaloacetate and related four-carbon dicarboxylates from mitochondrial matrix into the cytosol negatively regulates the oxidation of acetyl-CoA substrates via the Krebs cycle lowering the ATP/ADP ratio and reactive oxygen species (ROS) production. May mediate inducible proton entry into the mitochondrial matrix affecting ATP turnover as a protection mechanism against oxidative stress. The proton currents are most likely associated with fatty acid flipping across the inner membrane of mitochondria in a metabolic process regulated by free fatty acids and purine nucleotides. Regulates the use of glucose as a source of energy. Required for glucose-induced DRP1-dependent mitochondrial fission and neuron activation in the ventromedial nucleus of the hypothalamus (VMH). This mitochondrial adaptation mechanism modulates the VMH pool of glucose-excited neurons with an impact on systemic glucose homeostasis. Regulates ROS levels and metabolic reprogramming of macrophages during the resolution phase of inflammation. Attenuates ROS production in response to IL33 to preserve the integrity of the Krebs cycle required for persistent production of itaconate and subsequent GATA3-dependent differentiation of inflammation-resolving alternatively activated macrophages. Can unidirectionally transport anions including L-malate, L-aspartate, phosphate and chloride ions. Does not mediate adaptive thermogenesis. This chain is Dicarboxylate carrier UCP2 (UCP2), found in Pongo abelii (Sumatran orangutan).